A 184-amino-acid polypeptide reads, in one-letter code: Orotate phosphoribosyltransferase (184 aa).

5-phospho-alpha-D-ribose 1-diphosphate is bound by residues Arg99, Lys100, Lys103, His105, and 125 to 133 (EDTTTTGNS). Positions 129 and 157 each coordinate orotate.

Belongs to the purine/pyrimidine phosphoribosyltransferase family. PyrE subfamily. Homodimer. Requires Mg(2+) as cofactor.

The enzyme catalyses orotidine 5'-phosphate + diphosphate = orotate + 5-phospho-alpha-D-ribose 1-diphosphate. The protein operates within pyrimidine metabolism; UMP biosynthesis via de novo pathway; UMP from orotate: step 1/2. Functionally, catalyzes the transfer of a ribosyl phosphate group from 5-phosphoribose 1-diphosphate to orotate, leading to the formation of orotidine monophosphate (OMP). In Corynebacterium glutamicum (strain ATCC 13032 / DSM 20300 / JCM 1318 / BCRC 11384 / CCUG 27702 / LMG 3730 / NBRC 12168 / NCIMB 10025 / NRRL B-2784 / 534), this protein is Orotate phosphoribosyltransferase.